The following is a 198-amino-acid chain: MPEQSNDYRVVVFGAGGVGKSSLVLRFVKGTFRDTYIPTIEDTYRQVISCDKSVCTLQITDTTGSHQFPAMQRLSISKGHAFILVFSVTSKQSLDELSPIYKLIVQIKGSVEDIPIMLVGNKCDETQREVHTREAQAVAQEWKCAFMETSAKMNYNVKELFQELLTLETRRSVSLSVDGKRSSKQKRADRIKGKCALM.

GTP contacts are provided by residues 17 to 22 (GVGKSS), 33 to 39 (RDTYIPT), 61 to 65 (DTTGS), 121 to 125 (NKCDE), Ala-151, and 151 to 152 (AK). Residues 36-44 (YIPTIEDTY) carry the Effector region motif. Cys-195 carries the cysteine methyl ester modification. Residue Cys-195 is the site of S-geranylgeranyl cysteine attachment. Positions 196-198 (ALM) are cleaved as a propeptide — removed in mature form.

It belongs to the small GTPase superfamily. Di-Ras family.

It localises to the cell membrane. Functionally, displays low GTPase activity and exists predominantly in the GTP-bound form. The protein is GTP-binding protein Di-Ras1 (Diras1) of Mus musculus (Mouse).